The sequence spans 305 residues: NAD-dependent protein deacylase sirtuin-5, mitochondrial (305 aa).

Residues 1–32 (MIVRQLWCSRGSTSHLCAAVRLNWRSPKMTRP) constitute a mitochondrion transit peptide. Residues 33-303 (SSDLTAFREH…PPALERHESE (271 aa)) form the Deacetylase sirtuin-type domain. 54-73 (GAGVSAESGVPTFRGPGGFW) lines the NAD(+) pocket. 2 residues coordinate substrate: Tyr98 and Arg101. 136–139 (QNID) is an NAD(+) binding site. His154 (proton acceptor) is an active-site residue. Cys162, Cys165, Cys203, and Cys208 together coordinate Zn(2+). NAD(+) contacts are provided by residues 245–247 (GTS), 271–273 (NME), and Cys289.

This sequence belongs to the sirtuin family. Class III subfamily. Requires Zn(2+) as cofactor.

The protein localises to the mitochondrion. It is found in the cytoplasm. It localises to the cytosol. The protein resides in the nucleus. The enzyme catalyses N(6)-malonyl-L-lysyl-[protein] + NAD(+) + H2O = 2''-O-malonyl-ADP-D-ribose + nicotinamide + L-lysyl-[protein]. It catalyses the reaction N(6)-succinyl-L-lysyl-[protein] + NAD(+) + H2O = 2''-O-succinyl-ADP-D-ribose + nicotinamide + L-lysyl-[protein]. The catalysed reaction is N(6)-glutaryl-L-lysyl-[protein] + NAD(+) + H2O = 2''-O-glutaryl-ADP-D-ribose + nicotinamide + L-lysyl-[protein]. NAD-dependent lysine demalonylase, desuccinylase and deglutarylase that specifically removes malonyl, succinyl and glutaryl groups on target proteins. Has weak NAD-dependent protein deacetylase activity; however this activity may not be physiologically relevant in vivo. The protein is NAD-dependent protein deacylase sirtuin-5, mitochondrial (sirt5) of Danio rerio (Zebrafish).